The sequence spans 392 residues: F-box only protein 5-A (392 aa).

The interval 1–21 (MMCGFASNQSPKKLSSKKSSA) is disordered. Residues 7–20 (SNQSPKKLSSKKSS) are compositionally biased toward low complexity. The F-box domain occupies 197–244 (AELFHRDFKHLLTKILRHLSAMDLINVISVSTTWRKLLQKDNWAYNAY). The segment at 319 to 367 (SLKVCVDCGSPAKHDPCLHRAICTRESCKLDFCTRCSCKYHFSKSCLMS) adopts a ZBR-type zinc-finger fold. Zn(2+) is bound by residues cysteine 323, cysteine 326, cysteine 341, cysteine 346, cysteine 351, cysteine 354, histidine 359, and cysteine 364.

As to quaternary structure, part of a SCF (SKP1-cullin-F-box) protein ligase complex. Interacts with btrc. Interacts with skp1. Interacts with cdc20. Interacts with pin1; stabilizes fbxo5 by preventing its association with btrc in an isomerization-dependent pathway; this interaction is present during G2 phase and prevents fbxo5 degradation. Interacts with plk1. Proteolysed; proteolysis is induced by both cyclin B-cdk1 and cyclin A-cdk1/2 complex through probable phosphorylation. Proteolysis is inhibited by pin1 during G2.

The protein resides in the nucleus. The protein localises to the cytoplasm. It is found in the cytoskeleton. Its subcellular location is the spindle. It localises to the microtubule organizing center. The protein resides in the centrosome. It functions in the pathway protein modification; protein ubiquitination. In terms of biological role, regulates progression through early mitosis by inhibiting the anaphase promoting complex/cyclosome (APC). Binds to the APC activator cdc20 to prevent APC activation. Can also bind directly to the APC to inhibit substrate-binding. Required to arrest unfertilized eggs at metaphase of meiosis II, by preventing their release from metaphase of meiosis II, through inhibition of APC-dependent cyclin B destruction leading to stabilization of cyclin B-cdk1 complex activity. This Xenopus laevis (African clawed frog) protein is F-box only protein 5-A (fbxo5-a).